Consider the following 354-residue polypeptide: Dihydroorotate dehydrogenase (quinone) (354 aa).

FMN-binding positions include 61–65 and Ala-85; that span reads AGYDK. Residue Lys-65 participates in substrate binding. Position 110–114 (110–114) interacts with substrate; it reads NRFGF. The FMN site is built by Asn-139 and Asn-170. Substrate is bound at residue Asn-170. Ser-173 functions as the Nucleophile in the catalytic mechanism. Residue Asn-175 participates in substrate binding. FMN-binding residues include Lys-211 and Thr-239. A substrate-binding site is contributed by 240–241; sequence NT. Residues Gly-261, Gly-290, and 311–312 contribute to the FMN site; that span reads YT.

The protein belongs to the dihydroorotate dehydrogenase family. Type 2 subfamily. As to quaternary structure, monomer. It depends on FMN as a cofactor.

The protein resides in the cell membrane. It carries out the reaction (S)-dihydroorotate + a quinone = orotate + a quinol. Its pathway is pyrimidine metabolism; UMP biosynthesis via de novo pathway; orotate from (S)-dihydroorotate (quinone route): step 1/1. Its function is as follows. Catalyzes the conversion of dihydroorotate to orotate with quinone as electron acceptor. The chain is Dihydroorotate dehydrogenase (quinone) from Cereibacter sphaeroides (strain KD131 / KCTC 12085) (Rhodobacter sphaeroides).